The primary structure comprises 289 residues: Shikimate kinase (289 aa).

84 to 94 (PMASGLSSSSA) is a binding site for ATP.

This sequence belongs to the GHMP kinase family. Archaeal shikimate kinase subfamily.

Its subcellular location is the cytoplasm. The catalysed reaction is shikimate + ATP = 3-phosphoshikimate + ADP + H(+). Its pathway is metabolic intermediate biosynthesis; chorismate biosynthesis; chorismate from D-erythrose 4-phosphate and phosphoenolpyruvate: step 5/7. This Methanobrevibacter smithii (strain ATCC 35061 / DSM 861 / OCM 144 / PS) protein is Shikimate kinase.